Reading from the N-terminus, the 81-residue chain is Small ribosomal subunit protein bS16 (81 aa).

Belongs to the bacterial ribosomal protein bS16 family.

In Clostridium beijerinckii (strain ATCC 51743 / NCIMB 8052) (Clostridium acetobutylicum), this protein is Small ribosomal subunit protein bS16.